We begin with the raw amino-acid sequence, 1119 residues long: Putative transcription factor SEF1 (1119 aa).

Disordered stretches follow at residues 1–70 (MGDP…TQSR) and 86–105 (QNGE…SKGK). Over residues 47–70 (LHTQQSYYGNGTDGASESALTQSR) the composition is skewed to polar residues. The zn(2)-C6 fungal-type DNA-binding region spans 118–148 (CTHCRQHKIKCNASEKFPAPCSRCERMGLHC). Disordered stretches follow at residues 236 to 290 (QLLQ…PANT), 306 to 335 (SQQI…SSKQ), 894 to 913 (ASSS…TDTN), 926 to 962 (KKSS…AHNT), and 994 to 1018 (SADS…PDTN). The span at 243–260 (TTTTNPTTSSNSKVVTPT) shows a compositional bias: low complexity. Residues 261 to 288 (GSDHSPASHNGGSLSSGKPQLLNDSVPA) show a composition bias toward polar residues. Positions 306-322 (SQQISSSSPQNSSPTTT) are enriched in low complexity. 3 stretches are compositionally biased toward polar residues: residues 323-335 (GHSP…SSKQ), 902-913 (RLNADNPTTDTN), and 931-942 (SSDTPTNKPKFN). The span at 943–954 (STSSIPTATPTS) shows a compositional bias: low complexity.

The protein localises to the nucleus. Functionally, putative transcription factor. Suppresses the lethal phenotype of RPM2 deletion. This is Putative transcription factor SEF1 (SEF1) from Kluyveromyces lactis (strain ATCC 8585 / CBS 2359 / DSM 70799 / NBRC 1267 / NRRL Y-1140 / WM37) (Yeast).